Reading from the N-terminus, the 192-residue chain is Imidazoleglycerol-phosphate dehydratase (192 aa).

It belongs to the imidazoleglycerol-phosphate dehydratase family.

The protein localises to the cytoplasm. The catalysed reaction is D-erythro-1-(imidazol-4-yl)glycerol 3-phosphate = 3-(imidazol-4-yl)-2-oxopropyl phosphate + H2O. The protein operates within amino-acid biosynthesis; L-histidine biosynthesis; L-histidine from 5-phospho-alpha-D-ribose 1-diphosphate: step 6/9. In Carboxydothermus hydrogenoformans (strain ATCC BAA-161 / DSM 6008 / Z-2901), this protein is Imidazoleglycerol-phosphate dehydratase.